The primary structure comprises 185 residues: Ribosome-recycling factor (185 aa).

Belongs to the RRF family.

It is found in the cytoplasm. Functionally, responsible for the release of ribosomes from messenger RNA at the termination of protein biosynthesis. May increase the efficiency of translation by recycling ribosomes from one round of translation to another. This chain is Ribosome-recycling factor, found in Corynebacterium jeikeium (strain K411).